The chain runs to 45 residues: Large ribosomal subunit protein bL34 (45 aa).

Residues 1–45 (MTKRTFQPNNRRRARKHGFRARMRTRAGRAILSARRGKNRAELSA) form a disordered region. Basic residues predominate over residues 10–27 (NRRRARKHGFRARMRTRA).

The protein belongs to the bacterial ribosomal protein bL34 family.

This chain is Large ribosomal subunit protein bL34, found in Micrococcus luteus (strain ATCC 4698 / DSM 20030 / JCM 1464 / CCM 169 / CCUG 5858 / IAM 1056 / NBRC 3333 / NCIMB 9278 / NCTC 2665 / VKM Ac-2230) (Micrococcus lysodeikticus).